The following is a 134-amino-acid chain: Ribosome-binding factor A (134 aa).

This sequence belongs to the RbfA family. Monomer. Binds 30S ribosomal subunits, but not 50S ribosomal subunits or 70S ribosomes.

The protein localises to the cytoplasm. One of several proteins that assist in the late maturation steps of the functional core of the 30S ribosomal subunit. Associates with free 30S ribosomal subunits (but not with 30S subunits that are part of 70S ribosomes or polysomes). Required for efficient processing of 16S rRNA. May interact with the 5'-terminal helix region of 16S rRNA. The protein is Ribosome-binding factor A of Parasynechococcus marenigrum (strain WH8102).